The primary structure comprises 1031 residues: Serine-repeat antigen protein 6 (1031 aa).

A signal peptide spans 1–24 (MICPIFFLYIINVLFTQYFIKCEG). Residue N74 is glycosylated (N-linked (GlcNAc...) asparagine). A compositionally biased stretch (low complexity) spans 91–101 (KVVSSSESGKG). The tract at residues 91–163 (KVVSSSESGK…TESSSETLNK (73 aa)) is disordered. The segment covering 104 to 139 (VSHTKVTSEGLSDTQPNVTQSVSSSTHTPGSLDSTM) has biased composition (polar residues). N-linked (GlcNAc...) asparagine glycosylation is present at N120. Low complexity predominate over residues 140–158 (STEQHSSVSQSSLPTESSS). Residue N449 is glycosylated (N-linked (GlcNAc...) asparagine). The segment at 490 to 567 (TLPSESPSES…GDTNYVYDFD (78 aa)) is disordered. Over residues 492–505 (PSESPSESSSKSDS) the composition is skewed to low complexity. The span at 511 to 535 (NDKDKNEDKDDMSKNSKEEFKNDDK) shows a compositional bias: basic and acidic residues. The N-linked (GlcNAc...) asparagine glycan is linked to N544. A compositionally biased stretch (low complexity) spans 554-564 (NINNGDTNYVY). The N-linked (GlcNAc...) asparagine glycan is linked to N573. C644 is a catalytic residue. N-linked (GlcNAc...) asparagine glycosylation is present at N674. Catalysis depends on residues H810 and N835. Residues N929 and N974 are each glycosylated (N-linked (GlcNAc...) asparagine).

Belongs to the peptidase C1 family. Post-translationally, just prior to merozoite egress from host erythrocytes, proteolytically cleaved by SUB1 to generate the active 75kDa form.

The protein localises to the parasitophorous vacuole lumen. It is found in the parasitophorous vacuole membrane. Its function is as follows. Cysteine protease which plays an essential role in merozoite egress from host erythrocytes. May cleave host SPTB/beta spectrin and ANK1/ankyrin-1 which disrupts host erythrocyte actin cytoskeleton and leads to host erythrocyte cell membrane rupture. The polypeptide is Serine-repeat antigen protein 6 (Plasmodium falciparum (isolate 3D7)).